The primary structure comprises 291 residues: MPKTSYLNKNFESAHYNNVRPSYPLSLVNEIMKFHKGTRKSLVDIGCGTGKATFVVEPYFKEVIGIDPSSAMLSIAEKETNERRLDKKIRFINAPGEDLSSIRPESVDMVISAEAIHWCNLERLFQQVSSILRSDGTFAFWFYIQPEFVDFPEALNVYYKYGWSKDYMGKYLNDNQREILLNYGGEKLRSLLSDRFGDIEVTIYSPSDPNASTVTAENSQFLWRAAITLNQFKEFVKSWSIYTSWARDNPSKPDIADIFINELKEICHCEDLNVPLKIEWSTFYYLCRKRE.

The protein belongs to the methyltransferase superfamily.

It is found in the cytoplasm. In terms of biological role, probable S-adenosylmethionine-dependent methyltransferase which mediates cantharidin resistance. The protein is Probable S-adenosylmethionine-dependent methyltransferase CRG1 (CRG1) of Saccharomyces cerevisiae (strain ATCC 204508 / S288c) (Baker's yeast).